Consider the following 399-residue polypeptide: Elongation factor Tu (399 aa).

The 195-residue stretch at 10–204 (KPHVNIGTIG…AVDTSIPEPE (195 aa)) folds into the tr-type G domain. The interval 19-26 (GHVDHGKT) is G1. 19-26 (GHVDHGKT) contacts GTP. Residue Thr-26 participates in Mg(2+) binding. The segment at 60-64 (GITIN) is G2. Residues 81–84 (DCPG) form a G3 region. GTP contacts are provided by residues 81–85 (DCPGH) and 136–139 (NKCD). The tract at residues 136–139 (NKCD) is G4. Residues 174–176 (SGL) form a G5 region.

Belongs to the TRAFAC class translation factor GTPase superfamily. Classic translation factor GTPase family. EF-Tu/EF-1A subfamily. Monomer.

The protein localises to the cytoplasm. The catalysed reaction is GTP + H2O = GDP + phosphate + H(+). In terms of biological role, GTP hydrolase that promotes the GTP-dependent binding of aminoacyl-tRNA to the A-site of ribosomes during protein biosynthesis. This is Elongation factor Tu from Prochlorococcus marinus (strain MIT 9303).